A 278-amino-acid polypeptide reads, in one-letter code: HCLS1-associated protein X-1 (278 aa).

Residue Ser-2 is modified to N-acetylserine. The tract at residues 2–43 (SVFDLFRGFFGFPGPRSHRDPFFGGMTRDDDDDEDDEEEEDS) is required for localization in mitochondria. Disordered regions lie at residues 15–50 (GPRS…GRES) and 99–262 (LPSH…ALDD). Acidic residues predominate over residues 30 to 43 (DDDDDEDDEEEEDS). The interval 113-278 (TPGVRLREGQ…LLLGRWFRSR (166 aa)) is involved in HCLS1 binding. The span at 132-152 (PDSHQPRIFEGVLESHAKPES) shows a compositional bias: basic and acidic residues. The segment at 174–205 (VSPHSRAREDKDLDSQVSQEGLGPLLQPQPKS) is involved in CASP9 binding. The involved in GNA13 binding stretch occupies residues 175–246 (SPHSRAREDK…TTVTHQEAHD (72 aa)). A required for localization in sarcoplasmic reticulum region spans residues 182 to 278 (EDKDLDSQVS…LLLGRWFRSR (97 aa)). The tract at residues 183 to 278 (DKDLDSQVSQ…LLLGRWFRSR (96 aa)) is involved in PKD2 binding. 2 positions are modified to phosphoserine: Ser-188 and Ser-191. Residues 202–224 (QPKSYFKSISVTKITKPDGTVEE) are involved in PLN binding. The involved in ATP2A2 binding stretch occupies residues 202–244 (QPKSYFKSISVTKITKPDGTVEEHRTVVDSEGRRETTVTHQEA). Residues 209 to 278 (SISVTKITKP…LLLGRWFRSR (70 aa)) are mediates interaction with UCP3. Residues 216 to 254 (TKPDGTVEEHRTVVDSEGRRETTVTHQEAHDSSRSDPDP) are compositionally biased toward basic and acidic residues. The segment at 269-278 (LLLGRWFRSR) is required for ITGB6 binding.

Belongs to the HAX1 family. In terms of assembly, interacts with ABCB1, ABCB4 and ABCB11. Directly associates with HCLS1/HS1, through binding to its N-terminal region. Interacts with CTTN. Interacts with PKD2. Interacts with GNA13. Interacts with CASP9. Interacts with ITGB6. Interacts with PLN and ATP2A2; these interactions are inhibited by calcium. Interacts with GRB7. Interacts (via C-terminus) with XIAP/BIRC4 (via BIR 2 domain and BIR 3 domain) and this interaction blocks ubiquitination of XIAP/BIRC4. Interacts with TPC2. Interacts with KCNC3. Interacts with XPO1. Interacts with RNF217. Interacts with UCP3; the interaction is direct and calcium-dependent. Interacts with MAPRE2; this interaction regulates cell migration in keratinocytes. In terms of tissue distribution, present in striated muscles (at protein level).

The protein resides in the mitochondrion matrix. It is found in the endoplasmic reticulum. It localises to the nucleus membrane. The protein localises to the cytoplasmic vesicle. Its subcellular location is the cytoplasm. The protein resides in the cell cortex. It is found in the cell membrane. It localises to the sarcoplasmic reticulum. The protein localises to the P-body. Its subcellular location is the nucleus. Recruits the Arp2/3 complex to the cell cortex and regulates reorganization of the cortical actin cytoskeleton via its interaction with KCNC3 and the Arp2/3 complex. Slows down the rate of inactivation of KCNC3 channels. Promotes GNA13-mediated cell migration. Involved in the clathrin-mediated endocytosis pathway. May be involved in internalization of ABC transporters such as ABCB11. May inhibit CASP9 and CASP3. Promotes cell survival. May regulate intracellular calcium pools. In Rattus norvegicus (Rat), this protein is HCLS1-associated protein X-1 (Hax1).